Reading from the N-terminus, the 545-residue chain is E3 ubiquitin-protein ligase ipaH9.8 (545 aa).

Residues 1–242 (MLPINNNFSL…YHGPRIYFSM (242 aa)) form an interaction with target proteins region. LRR repeat units follow at residues 57 to 77 (NSDE…NLPA), 78 to 99 (QITL…PVTL), 100 to 117 (KKLY…VLPP), 118 to 139 (ALES…PDSL), 140 to 157 (LTMN…SLPQ), 158 to 179 (ALKN…SEGN), 182 to 203 (VVRE…ILNL), and 205 to 228 (NECS…QRLT). The interval 243-250 (SDGQQNTL) is linker. An E3 ubiquitin-protein ligase catalytic domain region spans residues 251-545 (HRPLADAVTA…SENGSQLHHS (295 aa)). An NEL domain is found at 253–545 (PLADAVTAWF…SENGSQLHHS (293 aa)). Catalysis depends on cysteine 337, which acts as the Glycyl thioester intermediate.

The protein belongs to the LRR-containing bacterial E3 ligase family. Also interacts with human and mouse U2AF1 (U2AF35). Post-translationally, ubiquitinated in the presence of host E1 ubiquitin-activating enzyme, E2 ubiquitin-conjugating enzyme and ubiquitin.

It localises to the secreted. The protein resides in the host cytoplasm. It is found in the host nucleus. It catalyses the reaction S-ubiquitinyl-[E2 ubiquitin-conjugating enzyme]-L-cysteine + [acceptor protein]-L-lysine = [E2 ubiquitin-conjugating enzyme]-L-cysteine + N(6)-ubiquitinyl-[acceptor protein]-L-lysine.. With respect to regulation, exists in an autoinhibited state in the absence of substrate protein, due to interactions of the leucine-rich repeats with NEL domain. Is activated upon binding to a substrate protein. Its function is as follows. Effector E3 ubiquitin ligase that interferes with host's ubiquitination pathway and modulates the acute inflammatory responses, thus facilitating bacterial colonization within the host cell. Interacts with IKBKG (NEMO) and TNIP1 (ABIN-1), a ubiquitin-binding adapter protein, which results in TNIP1-dependent 'Lys-27'-linked polyubiquitination of IKBKG. Consequently, polyubiquitinated IKBKG undergoes proteasome-dependent degradation, which perturbs NF-kappa-B activation during bacterial infection. Mediates polyubiquitination of host U2AF1, leading to its proteasomal degradation. Catalyzes 'Lys-48'-linked polyubiquitination and subsequent degradation of a subset of host guanylate-binding proteins (GBP1, GBP2, GBP4 and GBP6), thereby suppressing host cell defense. In contrast, host GBP3 and GBP7 are not ubiquitinated by IpaH9.8. Uses UBE2D2 (UBCH5B) as an E2 ubiquitin-conjugating enzyme. The polypeptide is E3 ubiquitin-protein ligase ipaH9.8 (ipaH9.8) (Shigella sonnei (strain Ss046)).